Here is a 322-residue protein sequence, read N- to C-terminus: Malate dehydrogenase (322 aa).

NAD(+) contacts are provided by residues 10-15 and Asp-34; that span reads GSGQIG. Positions 83 and 89 each coordinate substrate. NAD(+) contacts are provided by residues Asn-96 and 119–121; that span reads ITN. The substrate site is built by Asn-121 and Arg-152. The active-site Proton acceptor is the His-176.

Belongs to the LDH/MDH superfamily. MDH type 3 family.

It catalyses the reaction (S)-malate + NAD(+) = oxaloacetate + NADH + H(+). In terms of biological role, catalyzes the reversible oxidation of malate to oxaloacetate. The polypeptide is Malate dehydrogenase (Rhodopseudomonas palustris (strain HaA2)).